The primary structure comprises 209 residues: Ribosomal RNA large subunit methyltransferase E (209 aa).

S-adenosyl-L-methionine contacts are provided by Gly-63, Trp-65, Asp-83, Asp-99, and Asp-124. The Proton acceptor role is filled by Lys-164. Residues 191–209 (EASRGRSREVYIVAMGYMG) form the TRAM domain.

The protein belongs to the class I-like SAM-binding methyltransferase superfamily. RNA methyltransferase RlmE family.

It is found in the cytoplasm. The catalysed reaction is uridine(2552) in 23S rRNA + S-adenosyl-L-methionine = 2'-O-methyluridine(2552) in 23S rRNA + S-adenosyl-L-homocysteine + H(+). In terms of biological role, specifically methylates the uridine in position 2552 of 23S rRNA at the 2'-O position of the ribose in the fully assembled 50S ribosomal subunit. The polypeptide is Ribosomal RNA large subunit methyltransferase E (Histophilus somni (strain 129Pt) (Haemophilus somnus)).